A 77-amino-acid polypeptide reads, in one-letter code: Lantipeptide prochlorosin 4.3 (77 aa).

Positions 1–64 (MSEEQLKAFI…DDELEGVAGG (64 aa)) are excised as a propeptide. The residue at position 65 (Thr-65) is a 2,3-didehydrobutyrine. The lanthionine (Ser-Cys) cross-link spans 67 to 70 (SGGC). Residues 72 to 76 (TSMFC) constitute a cross-link (beta-methyllanthionine (Thr-Cys)).

Cross-links are proved in vitro, when coepressed in E.coli with the ProcM lanthionine synthetase. In terms of processing, the lanthionine residue has both a DL configuration (with 2S,6R stereochemistry) and a LL configuration (with 2R,6R stereochemistry). DL and LL diastomers have a 4:1 ratio. It is unknown whether nonenzymatic cyclization occur, but authors favor a model in which ProcM does generate all thioether cross-links. The beta-methyllanthionine residue has a DL configuration (with 2S,3S,6R stereochemistry). Post-translationally, maturation of prochlorosin involves the enzymatic conversion of Thr, and Ser into dehydrated AA and the formation of thioether bonds with cysteines. This is followed by membrane translocation and cleavage of the modified precursor.

Its subcellular location is the secreted. Functionally, lanthionine-containing peptide (lantipeptide) with unknown function. Does not show antibiotic activity against Lactococcus lactis 117 and Bacillus subtilis 6633 bacteria. Organisms that produce this peptide live in oligotrophic environments at very dilute concentrations, suggesting this peptide is not secreted to influence other bacteria. The chain is Lantipeptide prochlorosin 4.3 from Prochlorococcus marinus (strain MIT 9313).